We begin with the raw amino-acid sequence, 88 residues long: Putative membrane protein insertion efficiency factor (88 aa).

The tract at residues 67 to 88 (LNAGGYDPVPPKSDNHSKENKK) is disordered. The span at 79–88 (SDNHSKENKK) shows a compositional bias: basic and acidic residues.

Belongs to the UPF0161 family.

It is found in the cell inner membrane. Functionally, could be involved in insertion of integral membrane proteins into the membrane. This Actinobacillus succinogenes (strain ATCC 55618 / DSM 22257 / CCUG 43843 / 130Z) protein is Putative membrane protein insertion efficiency factor.